The sequence spans 375 residues: MNFSKLKFGATIGIIGGGQLGKMMAQSAQKMGYKVIVLDPNEDCPCRYVAHQFIHANYDDEQALNQLGENSDVVTYEFENISSEQLKKLTKLYHIPQGYQAIELLQDRLTEKQTLLEANTQIVPFVQIQTNQDLLKAIEKLGFPFIVKTRFGGYDGKGQILVRNDSELDEAYQLVEKQECVAEQYLDIQKEVSLTVTIGNEQQTTYFPLQENEHQNQILFKTVVPARSDKENEARKEVEKITRAIHFVGTFTVEFFIDKENNLYVNEIAPRPHNSGHYSIEACDYSQFDTHILAITGQKLPQAIELLKPTVMMNLLGRDLDLLENEFSRHPDWHIHIYGKKERKPDRKMGHMTLLTDDVNQTEQYMLMKFEGRDK.

ATP contacts are provided by residues arginine 108, lysine 148, 153-159, 183-186, glutamate 191, histidine 214, and 266-267; these read GYDGKGQ, EQYL, and NE. Residues 112–296 enclose the ATP-grasp domain; the sequence is KQTLLEANTQ…QFDTHILAIT (185 aa).

This sequence belongs to the PurK/PurT family. In terms of assembly, homodimer.

It catalyses the reaction 5-amino-1-(5-phospho-beta-D-ribosyl)imidazole + hydrogencarbonate + ATP = 5-carboxyamino-1-(5-phospho-D-ribosyl)imidazole + ADP + phosphate + 2 H(+). Its pathway is purine metabolism; IMP biosynthesis via de novo pathway; 5-amino-1-(5-phospho-D-ribosyl)imidazole-4-carboxylate from 5-amino-1-(5-phospho-D-ribosyl)imidazole (N5-CAIR route): step 1/2. Functionally, catalyzes the ATP-dependent conversion of 5-aminoimidazole ribonucleotide (AIR) and HCO(3)(-) to N5-carboxyaminoimidazole ribonucleotide (N5-CAIR). This is N5-carboxyaminoimidazole ribonucleotide synthase from Staphylococcus epidermidis (strain ATCC 35984 / DSM 28319 / BCRC 17069 / CCUG 31568 / BM 3577 / RP62A).